Reading from the N-terminus, the 156-residue chain is Transcriptional regulator MraZ (156 aa).

2 consecutive SpoVT-AbrB domains span residues 7-64 (KERH…EPSV) and 93-136 (LEMV…EPAR).

This sequence belongs to the MraZ family. Forms oligomers.

Its subcellular location is the cytoplasm. The protein localises to the nucleoid. The protein is Transcriptional regulator MraZ of Chlorobium phaeovibrioides (strain DSM 265 / 1930) (Prosthecochloris vibrioformis (strain DSM 265)).